The primary structure comprises 154 residues: 6,7-dimethyl-8-ribityllumazine synthase (154 aa).

Residues phenylalanine 22, 56–58 (AFE), and 80–82 (AVI) each bind 5-amino-6-(D-ribitylamino)uracil. 85-86 (AT) lines the (2S)-2-hydroxy-3-oxobutyl phosphate pocket. Histidine 88 functions as the Proton donor in the catalytic mechanism. Position 113 (phenylalanine 113) interacts with 5-amino-6-(D-ribitylamino)uracil. Arginine 127 is a binding site for (2S)-2-hydroxy-3-oxobutyl phosphate.

This sequence belongs to the DMRL synthase family.

The enzyme catalyses (2S)-2-hydroxy-3-oxobutyl phosphate + 5-amino-6-(D-ribitylamino)uracil = 6,7-dimethyl-8-(1-D-ribityl)lumazine + phosphate + 2 H2O + H(+). It participates in cofactor biosynthesis; riboflavin biosynthesis; riboflavin from 2-hydroxy-3-oxobutyl phosphate and 5-amino-6-(D-ribitylamino)uracil: step 1/2. In terms of biological role, catalyzes the formation of 6,7-dimethyl-8-ribityllumazine by condensation of 5-amino-6-(D-ribitylamino)uracil with 3,4-dihydroxy-2-butanone 4-phosphate. This is the penultimate step in the biosynthesis of riboflavin. The sequence is that of 6,7-dimethyl-8-ribityllumazine synthase from Clostridium botulinum (strain ATCC 19397 / Type A).